Here is a 588-residue protein sequence, read N- to C-terminus: Juvenile hormone esterase (588 aa).

The N-terminal stretch at 1–23 is a signal peptide; it reads MKFPKNLFLVLFYTSWKFCDVCA. 2 N-linked (GlcNAc...) asparagine glycosylation sites follow: Asn-79 and Asn-83. Cys-91 and Cys-109 are joined by a disulfide. Catalysis depends on Ser-214, which acts as the Acyl-ester intermediate. Asn-257 carries an N-linked (GlcNAc...) asparagine glycan. Cys-268 and Cys-281 are disulfide-bonded. The active-site Charge relay system is the Glu-350. 3 N-linked (GlcNAc...) asparagine glycosylation sites follow: Asn-389, Asn-396, and Asn-472. His-479 functions as the Charge relay system in the catalytic mechanism.

Belongs to the type-B carboxylesterase/lipase family.

The protein localises to the secreted. It catalyses the reaction juvenile hormone III + H2O = juvenile hormone III carboxylate + methanol + H(+). Its activity is regulated as follows. Inhibited by 3-octylthio-1,1,1-trifluoro-2-propanone (OTFP), a specific inhibitor of juvenile hormone esterase (JHE), but not by diisopropyl fluorophosphate (DFP), a serine enzyme inhibitor. Its function is as follows. May function as a juvenile hormone (JH)-specific degradation enzyme in vivo decreasing JH activity. Hydrolyzes JH III in vitro. Hydrolyzes effectively also methyl hepthylthioacetothioate (HEPTAT), a synthetic substrate. Of the general esterase substrates, it has preference for 2-naphthyl acetate (2-NA) and shows a weak activity for 1-NA and 4-nitrophenylacetate (4-NPA). The sequence is that of Juvenile hormone esterase from Tribolium castaneum (Red flour beetle).